We begin with the raw amino-acid sequence, 220 residues long: Large ribosomal subunit protein uL10c (220 aa).

The transit peptide at 1–41 (MEVALLSFSSSLSPLCHQRISTLTPKTSNSPNYPRLPVIRS) directs the protein to the chloroplast.

It belongs to the universal ribosomal protein uL10 family. As to quaternary structure, part of the 50S ribosomal subunit.

It localises to the plastid. It is found in the chloroplast. Its function is as follows. This protein binds directly to 23S ribosomal RNA. The sequence is that of Large ribosomal subunit protein uL10c (RPL10) from Arabidopsis thaliana (Mouse-ear cress).